We begin with the raw amino-acid sequence, 245 residues long: Phosphoribosyl isomerase A (245 aa).

The Proton acceptor role is filled by Asp11. Asp130 acts as the Proton donor in catalysis.

The protein belongs to the HisA/HisF family.

It is found in the cytoplasm. The catalysed reaction is 1-(5-phospho-beta-D-ribosyl)-5-[(5-phospho-beta-D-ribosylamino)methylideneamino]imidazole-4-carboxamide = 5-[(5-phospho-1-deoxy-D-ribulos-1-ylimino)methylamino]-1-(5-phospho-beta-D-ribosyl)imidazole-4-carboxamide. It carries out the reaction N-(5-phospho-beta-D-ribosyl)anthranilate = 1-(2-carboxyphenylamino)-1-deoxy-D-ribulose 5-phosphate. Its pathway is amino-acid biosynthesis; L-histidine biosynthesis; L-histidine from 5-phospho-alpha-D-ribose 1-diphosphate: step 4/9. It functions in the pathway amino-acid biosynthesis; L-tryptophan biosynthesis; L-tryptophan from chorismate: step 3/5. Involved in both the histidine and tryptophan biosynthetic pathways. The sequence is that of Phosphoribosyl isomerase A (priA) from Mycobacterium bovis (strain ATCC BAA-935 / AF2122/97).